The sequence spans 359 residues: Cytosolic sulfotransferase 15 (359 aa).

101–106 (KSGTTW) is a 3'-phosphoadenylyl sulfate binding site. Residue His-168 is the Proton acceptor of the active site. 3'-phosphoadenylyl sulfate is bound by residues Arg-190, Ser-198, Tyr-256, and 322–324 (RKG).

It belongs to the sulfotransferase 1 family. In terms of tissue distribution, expressed in leaves.

The protein localises to the cytoplasm. It carries out the reaction a 12-hydroxyjasmonate + 3'-phosphoadenylyl sulfate = a 12-sulfojasmonate + adenosine 3',5'-bisphosphate + H(+). Its function is as follows. Sulfotransferase that utilizes 3'-phospho-5'-adenylyl sulfate (PAPS) as sulfonate donor to specifically catalyze the sulfate conjugation of hydroxyjasmonates, with a preference for 12-hydroxyjasmonate over 11-hydroxyjasmonate. No activity with 12-hydroxyjasmonic acid methyl ester, cucurbic acid, 7-iso-cucurbic acid, 6-epi-cucurbic acid, 6-epi-7-iso-cucurbic acid and their methyl esters, prostaglandin E2, arachidonyl alcohol and 11-eicosenol. This Arabidopsis thaliana (Mouse-ear cress) protein is Cytosolic sulfotransferase 15 (SOT15).